The primary structure comprises 581 residues: Laccase-1 (581 aa).

The signal sequence occupies residues 1 to 25 (MENLGFLIISTFLLLFTTLLPYSSA). Plastocyanin-like domains lie at 34-150 (NVEW…PRQP) and 161-312 (EIPI…YTGK). N80 is a glycosylation site (N-linked (GlcNAc...) asparagine). The Cu cation site is built by H84, H86, H129, and H131. 4 N-linked (GlcNAc...) asparagine glycosylation sites follow: N241, N300, N386, and N403. Residues 429 to 565 (DFPEKPPNRF…AMGFIVKDGP (137 aa)) form the Plastocyanin-like 3 domain. Cu cation is bound by residues H482, H485, H487, H544, C545, H546, and H550.

This sequence belongs to the multicopper oxidase family. Cu cation is required as a cofactor. Expressed in roots, stems and flowers.

Its subcellular location is the secreted. The protein resides in the extracellular space. It localises to the apoplast. It catalyses the reaction 4 hydroquinone + O2 = 4 benzosemiquinone + 2 H2O. Functionally, lignin degradation and detoxification of lignin-derived products. The chain is Laccase-1 (LAC1) from Arabidopsis thaliana (Mouse-ear cress).